The sequence spans 216 residues: MSLGLVGRKVGMTRIFTDDGEAIPVTVVEVGDNRVTQIKTDETDGYTAVQVTFGARRASRVTKPLAGHLAKAGVEAGEIIREFRIDAAKAAELQAGGSLSVDLFEVGQKIDVQGVTIGKGYAGTIKRYHFASGRATHGNSRSHNVPGSIGMAQDPGRVFPGKRMTGHLGDVTRTVQNLEIAKIDAERKLLLVKGAIPGSKNGKVIVTPAVKAKAKA.

The tract at residues 134–153 is disordered; the sequence is RATHGNSRSHNVPGSIGMAQ. An N5-methylglutamine modification is found at Gln-153.

It belongs to the universal ribosomal protein uL3 family. In terms of assembly, part of the 50S ribosomal subunit. Forms a cluster with proteins L14 and L19. In terms of processing, methylated by PrmB.

Functionally, one of the primary rRNA binding proteins, it binds directly near the 3'-end of the 23S rRNA, where it nucleates assembly of the 50S subunit. The polypeptide is Large ribosomal subunit protein uL3 (Cupriavidus taiwanensis (strain DSM 17343 / BCRC 17206 / CCUG 44338 / CIP 107171 / LMG 19424 / R1) (Ralstonia taiwanensis (strain LMG 19424))).